A 257-amino-acid polypeptide reads, in one-letter code: tRNA pseudouridine synthase A (257 aa).

Aspartate 53 acts as the Nucleophile in catalysis. Tyrosine 111 contributes to the substrate binding site.

The protein belongs to the tRNA pseudouridine synthase TruA family. In terms of assembly, homodimer.

It carries out the reaction uridine(38/39/40) in tRNA = pseudouridine(38/39/40) in tRNA. Functionally, formation of pseudouridine at positions 38, 39 and 40 in the anticodon stem and loop of transfer RNAs. The sequence is that of tRNA pseudouridine synthase A from Xanthomonas campestris pv. campestris (strain 8004).